The sequence spans 443 residues: Signal recognition particle 54 kDa protein (443 aa).

Residues 107-114 (GVQGSGKT), 189-193 (DTAGR), and 247-250 (TKLD) contribute to the GTP site.

This sequence belongs to the GTP-binding SRP family. SRP54 subfamily. In terms of assembly, part of the signal recognition particle protein translocation system, which is composed of SRP and FtsY. Archaeal SRP consists of a 7S RNA molecule of 300 nucleotides and two protein subunits: SRP54 and SRP19.

The protein localises to the cytoplasm. The enzyme catalyses GTP + H2O = GDP + phosphate + H(+). Its function is as follows. Involved in targeting and insertion of nascent membrane proteins into the cytoplasmic membrane. Binds to the hydrophobic signal sequence of the ribosome-nascent chain (RNC) as it emerges from the ribosomes. The SRP-RNC complex is then targeted to the cytoplasmic membrane where it interacts with the SRP receptor FtsY. This Pyrococcus horikoshii (strain ATCC 700860 / DSM 12428 / JCM 9974 / NBRC 100139 / OT-3) protein is Signal recognition particle 54 kDa protein.